Reading from the N-terminus, the 239-residue chain is MLFTPPLIPATLISRYKRFLFDAVLEDGTAITGSCPNTGSMRGLTTPGSRIWLSEHDSPTRKYRHMFEMVEADGTVVGINTGMPNRLAEEAILNGRIPELAGYSTIRREQKYGRNSRIDFLLSEPGRPDAYVEVKNVHFMREKGLAEFPDTATKRGAKHLEELGDAAEAGYRSVMLYLIQRDDCERMRICADLDPIYALAFQRAMARGVEAYAVKCAVSPTQISVSGTVKMDEWRPAVL.

It belongs to the SfsA family.

The chain is Sugar fermentation stimulation protein homolog from Agrobacterium fabrum (strain C58 / ATCC 33970) (Agrobacterium tumefaciens (strain C58)).